A 121-amino-acid chain; its full sequence is Large ribosomal subunit protein bL12 (121 aa).

The protein belongs to the bacterial ribosomal protein bL12 family. Homodimer. Part of the ribosomal stalk of the 50S ribosomal subunit. Forms a multimeric L10(L12)X complex, where L10 forms an elongated spine to which 2 to 4 L12 dimers bind in a sequential fashion. Binds GTP-bound translation factors.

Functionally, forms part of the ribosomal stalk which helps the ribosome interact with GTP-bound translation factors. Is thus essential for accurate translation. In Lachnospira eligens (strain ATCC 27750 / DSM 3376 / VPI C15-48 / C15-B4) (Eubacterium eligens), this protein is Large ribosomal subunit protein bL12.